A 151-amino-acid polypeptide reads, in one-letter code: Small ribosomal subunit protein uS15 (151 aa).

The protein belongs to the universal ribosomal protein uS15 family.

This is Small ribosomal subunit protein uS15 (RpS13) from Spodoptera frugiperda (Fall armyworm).